Reading from the N-terminus, the 216-residue chain is Nucleoside triphosphate pyrophosphatase (216 aa).

The active-site Proton acceptor is the aspartate 82.

The protein belongs to the Maf family. It depends on a divalent metal cation as a cofactor.

The protein resides in the cytoplasm. The catalysed reaction is a ribonucleoside 5'-triphosphate + H2O = a ribonucleoside 5'-phosphate + diphosphate + H(+). It carries out the reaction a 2'-deoxyribonucleoside 5'-triphosphate + H2O = a 2'-deoxyribonucleoside 5'-phosphate + diphosphate + H(+). Its function is as follows. Nucleoside triphosphate pyrophosphatase. May have a dual role in cell division arrest and in preventing the incorporation of modified nucleotides into cellular nucleic acids. This chain is Nucleoside triphosphate pyrophosphatase, found in Mycobacterium ulcerans (strain Agy99).